The following is a 534-amino-acid chain: CTP synthase (534 aa).

The segment at 1–265 (MKYIVVTGGV…TTRLMKHLKL (265 aa)) is amidoligase domain. Residue Ser12 participates in CTP binding. Ser12 is a binding site for UTP. 13–18 (GLGKGI) provides a ligand contact to ATP. An L-glutamine-binding site is contributed by Tyr53. Asp70 lines the ATP pocket. Residues Asp70 and Glu140 each coordinate Mg(2+). CTP is bound by residues 147–149 (DIE), 186–191 (KTKPSQ), and Lys222. Residues 186 to 191 (KTKPSQ) and Lys222 contribute to the UTP site. Residues 289-530 (KLAIVGKYTN…VRAMCKYNKE (242 aa)) form the Glutamine amidotransferase type-1 domain. Gly352 contacts L-glutamine. Residue Cys379 is the Nucleophile; for glutamine hydrolysis of the active site. Residues 380-383 (LGMQ), Glu403, and Arg460 each bind L-glutamine. Active-site residues include His503 and Glu505.

This sequence belongs to the CTP synthase family. In terms of assembly, homotetramer.

It catalyses the reaction UTP + L-glutamine + ATP + H2O = CTP + L-glutamate + ADP + phosphate + 2 H(+). It carries out the reaction L-glutamine + H2O = L-glutamate + NH4(+). The catalysed reaction is UTP + NH4(+) + ATP = CTP + ADP + phosphate + 2 H(+). The protein operates within pyrimidine metabolism; CTP biosynthesis via de novo pathway; CTP from UDP: step 2/2. Allosterically activated by GTP, when glutamine is the substrate; GTP has no effect on the reaction when ammonia is the substrate. The allosteric effector GTP functions by stabilizing the protein conformation that binds the tetrahedral intermediate(s) formed during glutamine hydrolysis. Inhibited by the product CTP, via allosteric rather than competitive inhibition. Functionally, catalyzes the ATP-dependent amination of UTP to CTP with either L-glutamine or ammonia as the source of nitrogen. Regulates intracellular CTP levels through interactions with the four ribonucleotide triphosphates. The protein is CTP synthase of Methanosarcina acetivorans (strain ATCC 35395 / DSM 2834 / JCM 12185 / C2A).